A 369-amino-acid polypeptide reads, in one-letter code: MTLEEKEEVSTSTSQSPQSSSFENVFCAICGDRATGKHYGAMSCDGCKGFFRRTIRKRHSYVCRFGEKCQVDKAKRNSCRKCRFDVCLRKGMRRDAVQTERDRIRPANPLSNGSNGGIVPDDPLLDTLIRAEASTRGLRTTVITKTAEARKQATTNDVTDSMNQQLTLMVEWAKVLEGFQRVDNITQVALLRHFSAQHLVMCAAFRSIHLSDAVWLTNETCLHKDSPKIPDMNRVAERIIDQVTNPMRSLHMNEIEYIALKAIAFFDPLAKGITSESYSDVEEMRQRILESFERHVRYVSPYKDMPLRFANLLLLLPPMLAISRDLVEDVQLAKLFGLASIDNLMLELMLPNEGKNTTDKTSPPIMCHQ.

The nuclear receptor DNA-binding region spans 67-142 (EKCQVDKAKR…ASTRGLRTTV (76 aa)). 2 consecutive NR C4-type zinc fingers follow at residues 70–90 (QVDK…CLRK) and 106–130 (PANP…TLIR). In terms of domain architecture, NR LBD spans 120-352 (PDDPLLDTLI…NLMLELMLPN (233 aa)).

It belongs to the nuclear hormone receptor family.

It localises to the nucleus. Functionally, orphan nuclear receptor. The polypeptide is Nuclear hormone receptor family member nhr-64 (nhr-64) (Caenorhabditis elegans).